The following is a 462-amino-acid chain: Bifunctional protein GlmU (462 aa).

The pyrophosphorylase stretch occupies residues 1-239; that stretch reads MTESVSKPVR…EASVQGVNAQ (239 aa). Residues 17-20, lysine 31, glutamine 84, and 89-90 contribute to the UDP-N-acetyl-alpha-D-glucosamine site; these read LAAG and GT. A Mg(2+)-binding site is contributed by aspartate 114. Positions 150, 165, 180, and 237 each coordinate UDP-N-acetyl-alpha-D-glucosamine. Mg(2+) is bound at residue asparagine 237. Positions 240–260 are linker; sequence AELAAAEAVWQQNRRKALMVD. The N-acetyltransferase stretch occupies residues 261–462; the sequence is GVTMPAPDTV…QKDKKKDKKA (202 aa). UDP-N-acetyl-alpha-D-glucosamine-binding residues include arginine 326 and lysine 344. Histidine 356 functions as the Proton acceptor in the catalytic mechanism. Tyrosine 359 and asparagine 370 together coordinate UDP-N-acetyl-alpha-D-glucosamine. Acetyl-CoA-binding positions include alanine 373, 379 to 380, serine 398, serine 416, and arginine 433; that span reads NY.

The protein in the N-terminal section; belongs to the N-acetylglucosamine-1-phosphate uridyltransferase family. This sequence in the C-terminal section; belongs to the transferase hexapeptide repeat family. Homotrimer. Mg(2+) serves as cofactor.

The protein localises to the cytoplasm. It carries out the reaction alpha-D-glucosamine 1-phosphate + acetyl-CoA = N-acetyl-alpha-D-glucosamine 1-phosphate + CoA + H(+). The catalysed reaction is N-acetyl-alpha-D-glucosamine 1-phosphate + UTP + H(+) = UDP-N-acetyl-alpha-D-glucosamine + diphosphate. The protein operates within nucleotide-sugar biosynthesis; UDP-N-acetyl-alpha-D-glucosamine biosynthesis; N-acetyl-alpha-D-glucosamine 1-phosphate from alpha-D-glucosamine 6-phosphate (route II): step 2/2. It participates in nucleotide-sugar biosynthesis; UDP-N-acetyl-alpha-D-glucosamine biosynthesis; UDP-N-acetyl-alpha-D-glucosamine from N-acetyl-alpha-D-glucosamine 1-phosphate: step 1/1. Its pathway is bacterial outer membrane biogenesis; LPS lipid A biosynthesis. Catalyzes the last two sequential reactions in the de novo biosynthetic pathway for UDP-N-acetylglucosamine (UDP-GlcNAc). The C-terminal domain catalyzes the transfer of acetyl group from acetyl coenzyme A to glucosamine-1-phosphate (GlcN-1-P) to produce N-acetylglucosamine-1-phosphate (GlcNAc-1-P), which is converted into UDP-GlcNAc by the transfer of uridine 5-monophosphate (from uridine 5-triphosphate), a reaction catalyzed by the N-terminal domain. The chain is Bifunctional protein GlmU from Caulobacter vibrioides (strain ATCC 19089 / CIP 103742 / CB 15) (Caulobacter crescentus).